Here is a 233-residue protein sequence, read N- to C-terminus: Zinc metalloproteinase recombinant fibrinogenase II (233 aa).

A Peptidase M12B domain is found at 19-215 (KYVETVFVVD…HNPECIDNEP (197 aa)). Ca(2+) contacts are provided by Glu-22 and Asp-106. Disulfide bonds link Cys-130–Cys-210, Cys-170–Cys-194, and Cys-172–Cys-177. His-155 is a binding site for Zn(2+). Glu-156 is an active-site residue. His-159 and His-165 together coordinate Zn(2+). Asn-193 carries N-linked (GlcNAc...) asparagine glycosylation. Residues Cys-210, Asn-213, Asn-228, Leu-230, and Glu-232 each contribute to the Ca(2+) site.

The protein belongs to the venom metalloproteinase (M12B) family. P-III subfamily. Zn(2+) is required as a cofactor. Expressed by the venom gland.

The protein localises to the secreted. With respect to regulation, inhibited by PMSF and EDTA. Slightly inhibited by Cu(2+) and Zn(2+). Not inhibited by aprotinin, SBTI, Ca(2+), Mg(2+), Na(+) and K(+). Its function is as follows. Snake venom zinc metalloprotease that acts at several levels. It has direct fibrino(geno)lytic activity (Aalpha chain of fibrinogen is cleaved quickly, Bbeta chain slowly, and gamma chain even more slowly) and degradation of TNF-alpha. These activities permit to protect against sepsis and disseminated intravascular coagulation. It inhibits ADP-induced platelet aggregation in human platelet-rich plasma (IC(50)=65.4 ug/ml). It decreases the activity of complement by degrading human C5, C6 and C9 in vitro, decreasing serum levels of C1q, C3 and C4 in rat, and inhibiting the MAC deposition on HUVECs membrane. This inhibition of complement protects against hyperacute rejection that is the main barrier in xenotransplantation. Has preference for Lys at the P1 position. Cleaves insulin B chain at '36-Val-|-Glu-37', '39-Leu-|-Tyr-40', and '48-Phe-|-Phe-49' bonds. Also cleaves fibronectin and type IV collagen. This Deinagkistrodon acutus (Hundred-pace snake) protein is Zinc metalloproteinase recombinant fibrinogenase II.